We begin with the raw amino-acid sequence, 53 residues long: Ovomucoid (53 aa).

The Kazal-like domain maps to 3–53 (VDCSEYPQPTCTTEHRPVCGSNNETYGNKCNFCNAVVKSNGTLTVSHFGKC). 3 disulfide bridges follow: Cys5–Cys35, Cys13–Cys32, and Cys21–Cys53. The N-linked (GlcNAc...) asparagine glycan is linked to Asn42.

The protein resides in the secreted. The polypeptide is Ovomucoid (Polyplectron bicalcaratum (Grey peacock-pheasant)).